Here is a 69-residue protein sequence, read N- to C-terminus: Protein translocase subunit SecE (69 aa).

The helical transmembrane segment at 43-63 threads the bilayer; sequence GLGICLLGFVGFVIHVPITYL.

This sequence belongs to the SecE/SEC61-gamma family. In terms of assembly, component of the Sec protein translocase complex. Heterotrimer consisting of SecY (alpha), SecG (beta) and SecE (gamma) subunits. The heterotrimers can form oligomers, although 1 heterotrimer is thought to be able to translocate proteins. Interacts with the ribosome. May interact with SecDF, and other proteins may be involved.

The protein localises to the cell membrane. In terms of biological role, essential subunit of the Sec protein translocation channel SecYEG. Clamps together the 2 halves of SecY. May contact the channel plug during translocation. The protein is Protein translocase subunit SecE of Methanococcus maripaludis (strain DSM 14266 / JCM 13030 / NBRC 101832 / S2 / LL).